The primary structure comprises 317 residues: Glutamyl-tRNA reductase-binding protein, chloroplastic (317 aa).

The N-terminal 42 residues, Met1 to Cys42, are a transit peptide targeting the chloroplast.

In terms of assembly, interacts with HEMA1 and forms a heterotetramer of two GLUTRBP and two HEMA1 subunits.

It is found in the plastid. Its subcellular location is the chloroplast stroma. Involved in the regulation of glutamyl-tRNA reductase (GluTR) which is important for the synthesis and distribution of 5-aminolevulinate, a precursor in heme and chlorophyll biosynthesis. Stimulates GluTR activity and regulates glutamate-1-semialdehyde release. May play a role in heme metabolism. Necessary for efficient photosynthetic electron transport in chloroplasts. The chain is Glutamyl-tRNA reductase-binding protein, chloroplastic from Arabidopsis thaliana (Mouse-ear cress).